The following is a 351-amino-acid chain: MARLLIAASGTGGHLFPALALAEHLPDYQIEWLGVPDRLEQTLVGDRYPLHSIAVEGFQTRSVLKNLQILFKLIRGIFEVRHLIKTHHIDVVFTTGGYIAAPAILGARLAGIRAILHESNFIPGKVTRLLSRFCDRVALGFAGTAQYLPKAKTVWVSTPVRSPFYTPQPLDLPIPENVPLIAVIGGSQGAIAVNQLVRQCVPSWLAAGAYIVHLTGKNDPEAETFKHPHYFALPFYDNMAGLLQRANLAVSRAGAGTLTELAITGTPSILIPYPFAAEDHQAYNAQVFADAQAALLYRQAELTPEILENAVLNCLKHPETLESMAKQAQRLAVLDSAQQLATLVNGFVQVT.

Residues 11 to 13 (TGG), Asn-120, Arg-161, Ser-187, and Gln-281 each bind UDP-N-acetyl-alpha-D-glucosamine.

The protein belongs to the glycosyltransferase 28 family. MurG subfamily.

It is found in the cell inner membrane. The catalysed reaction is di-trans,octa-cis-undecaprenyl diphospho-N-acetyl-alpha-D-muramoyl-L-alanyl-D-glutamyl-meso-2,6-diaminopimeloyl-D-alanyl-D-alanine + UDP-N-acetyl-alpha-D-glucosamine = di-trans,octa-cis-undecaprenyl diphospho-[N-acetyl-alpha-D-glucosaminyl-(1-&gt;4)]-N-acetyl-alpha-D-muramoyl-L-alanyl-D-glutamyl-meso-2,6-diaminopimeloyl-D-alanyl-D-alanine + UDP + H(+). It functions in the pathway cell wall biogenesis; peptidoglycan biosynthesis. Functionally, cell wall formation. Catalyzes the transfer of a GlcNAc subunit on undecaprenyl-pyrophosphoryl-MurNAc-pentapeptide (lipid intermediate I) to form undecaprenyl-pyrophosphoryl-MurNAc-(pentapeptide)GlcNAc (lipid intermediate II). This is UDP-N-acetylglucosamine--N-acetylmuramyl-(pentapeptide) pyrophosphoryl-undecaprenol N-acetylglucosamine transferase from Rippkaea orientalis (strain PCC 8801 / RF-1) (Cyanothece sp. (strain PCC 8801)).